The primary structure comprises 295 residues: Protease HtpX (295 aa).

The next 2 helical transmembrane spans lie at 4–24 (ILLF…TLSL) and 42–62 (QLLV…LFIS). Residue histidine 147 participates in Zn(2+) binding. Residue glutamate 148 is part of the active site. Histidine 151 contacts Zn(2+). The next 2 helical transmembrane spans lie at 158–178 (VTLA…ARII) and 199–219 (ITTI…VMWF). Glutamate 224 serves as a coordination point for Zn(2+).

The protein belongs to the peptidase M48B family. Zn(2+) serves as cofactor.

The protein resides in the cell inner membrane. In Pseudomonas syringae pv. tomato (strain ATCC BAA-871 / DC3000), this protein is Protease HtpX.